The chain runs to 489 residues: Lysine--tRNA ligase (489 aa).

The Mg(2+) site is built by Glu399 and Glu406.

This sequence belongs to the class-II aminoacyl-tRNA synthetase family. Homodimer. The cofactor is Mg(2+).

The protein localises to the cytoplasm. It carries out the reaction tRNA(Lys) + L-lysine + ATP = L-lysyl-tRNA(Lys) + AMP + diphosphate. This Roseiflexus sp. (strain RS-1) protein is Lysine--tRNA ligase.